We begin with the raw amino-acid sequence, 479 residues long: F-box protein At5g51380 (479 aa).

The disordered stretch occupies residues 1-20 (MTFREKMPTSPKSPLRRRRS). The F-box domain maps to 62–108 (DRTLSLSDSLLLKILEKLPESQNEDVSLVCKRWLSVQGRRLRSMKVF).

The protein is F-box protein At5g51380 of Arabidopsis thaliana (Mouse-ear cress).